Reading from the N-terminus, the 299-residue chain is UDP-N-acetylenolpyruvoylglucosamine reductase (299 aa).

The FAD-binding PCMH-type domain occupies 29–193 (RIGGPAEIFL…TAASLRFRKA (165 aa)). Arginine 173 is a catalytic residue. Serine 222 (proton donor) is an active-site residue. Glutamate 292 is an active-site residue.

It belongs to the MurB family. FAD is required as a cofactor.

The protein resides in the cytoplasm. It carries out the reaction UDP-N-acetyl-alpha-D-muramate + NADP(+) = UDP-N-acetyl-3-O-(1-carboxyvinyl)-alpha-D-glucosamine + NADPH + H(+). The protein operates within cell wall biogenesis; peptidoglycan biosynthesis. Its function is as follows. Cell wall formation. In Syntrophotalea carbinolica (strain DSM 2380 / NBRC 103641 / GraBd1) (Pelobacter carbinolicus), this protein is UDP-N-acetylenolpyruvoylglucosamine reductase.